The sequence spans 640 residues: Protelomerase (640 aa).

DNA is bound by residues Arg275, Lys300, Arg383, and His416. Catalysis depends on Tyr425, which acts as the Nucleophile. Acidic residues predominate over residues 545–585; it reads VDLDDENHDDETLDDDEIEVDESEGEELEEAGDAEEAEVAE. The interval 545-605 is disordered; it reads VDLDDENHDD…FKAPRDNGDG (61 aa).

The protein belongs to the Caudoviricetes Protelomerase family. Monomer. Homodimer; in presence of DNA.

Its function is as follows. Converts the circular intermediates produced by the viral replication and carrying a joined telomere site to a linear DNA molecule with covalently closed hairpin ends. The viral circular DNA is cleaved at a palindromic site called telRL thereby generating a linear prophage plasmid with telomeres. Binds covalently to the 3'-phosphoryl of the cleaved strands. This chain is Protelomerase, found in Klebsiella oxytoca (Bacteriophage phiKO2).